The chain runs to 220 residues: RING-H2 finger protein ATL77 (220 aa).

Residues 53-73 (LMLLSILLCGIICSLGLHYII) form a helical membrane-spanning segment. The RING-type; atypical zinc-finger motif lies at 130–172 (CVICLSDFVAGEQLRVLPKCNHGFHLRCIDKWLTQHMTCPKCR).

Belongs to the RING-type zinc finger family. ATL subfamily.

The protein resides in the membrane. It carries out the reaction S-ubiquitinyl-[E2 ubiquitin-conjugating enzyme]-L-cysteine + [acceptor protein]-L-lysine = [E2 ubiquitin-conjugating enzyme]-L-cysteine + N(6)-ubiquitinyl-[acceptor protein]-L-lysine.. It participates in protein modification; protein ubiquitination. The polypeptide is RING-H2 finger protein ATL77 (ATL77) (Arabidopsis thaliana (Mouse-ear cress)).